The sequence spans 275 residues: NH(3)-dependent NAD(+) synthetase (275 aa).

50–57 provides a ligand contact to ATP; it reads GISGGVDS. Position 56 (Asp56) interacts with Mg(2+). Arg147 contributes to the deamido-NAD(+) binding site. Thr167 is a binding site for ATP. Glu172 provides a ligand contact to Mg(2+). Positions 180 and 187 each coordinate deamido-NAD(+). Positions 196 and 218 each coordinate ATP. 267–268 contacts deamido-NAD(+); it reads HK.

Belongs to the NAD synthetase family. Homodimer.

The catalysed reaction is deamido-NAD(+) + NH4(+) + ATP = AMP + diphosphate + NAD(+) + H(+). It functions in the pathway cofactor biosynthesis; NAD(+) biosynthesis; NAD(+) from deamido-NAD(+) (ammonia route): step 1/1. In terms of biological role, catalyzes the ATP-dependent amidation of deamido-NAD to form NAD. Uses ammonia as a nitrogen source. The sequence is that of NH(3)-dependent NAD(+) synthetase from Pseudomonas putida (strain ATCC 47054 / DSM 6125 / CFBP 8728 / NCIMB 11950 / KT2440).